Here is a 216-residue protein sequence, read N- to C-terminus: Somatotropin (216 aa).

Residues 1 to 26 (MAADSQTPWLLTFSLLCLLWPQEAGA) form the signal peptide. A Zn(2+)-binding site is contributed by His-45. Cys-78 and Cys-189 form a disulfide bridge. Position 131 is a phosphoserine (Ser-131). Glu-198 contributes to the Zn(2+) binding site. A disulfide bond links Cys-206 and Cys-214.

This sequence belongs to the somatotropin/prolactin family.

It is found in the secreted. In terms of biological role, plays an important role in growth control. Its major role in stimulating body growth is to stimulate the liver and other tissues to secrete IGF1. It stimulates both the differentiation and proliferation of myoblasts. It also stimulates amino acid uptake and protein synthesis in muscle and other tissues. This is Somatotropin (Gh1) from Rattus norvegicus (Rat).